We begin with the raw amino-acid sequence, 511 residues long: MHTTESKDEHLEDENFQTSTTPQSLIDPNSTAHEETKTVISDTEEIKPQTKKKTYISCPLRGALNRIITNGVILFVIWCTTWSVLGSEALPGGNLFGLLIIFCSAIIGGKILQLIRIPLVPPLPPLLGMLLAGFTIRNVPFISKHVHVHNTWSSILRSTALTVILIRAGLGLDPQALRHLKVVCFRLAVGPCLMEASAAAVFSHFIMKFPWEWAFLLGFVLGAVSPAIVVPSMMVLQENGYGVEEGIPSLLMAASSMDDVLAITGFNTCLSIVFSSGGIVNNAIASIKSVSISLLAGIVLGFFVRYFPSEDQKKLALERGFLILTMCVSAVLGSQRIGLHGTGGLFTLVLSFIAGTKWSQEKMKVQKIITNVWDIFQPLLFGLVGAEVSVSLLESNTIGIFVATLSLALCVRILVTYILMCFAGFSFKEKIFIALAWMPKATVQAVLGPLVLETARVSAPHLEPYSKDVMTVAFLAILITAPNGALLMGILGPKLLRRHYDPSKIKLQLST.

Positions 1–10 (MHTTESKDEH) are enriched in basic and acidic residues. Positions 1-41 (MHTTESKDEHLEDENFQTSTTPQSLIDPNSTAHEETKTVIS) are disordered. Polar residues predominate over residues 16-31 (FQTSTTPQSLIDPNST). A run of 13 helical transmembrane segments spans residues 67 to 87 (IITN…VLGS), 95 to 115 (LFGL…LQLI), 116 to 136 (RIPL…GFTI), 152 to 172 (WSSI…GLGL), 187 to 207 (LAVG…HFIM), 215 to 235 (FLLG…SMMV), 260 to 280 (VLAI…GGIV), 284 to 304 (IASI…GFFV), 337 to 357 (IGLH…AGTK), 368 to 388 (IITN…GAEV), 398 to 418 (IGIF…VTYI), 431 to 451 (IFIA…GPLV), and 472 to 492 (VAFL…GILG).

Belongs to the monovalent cation:proton antiporter 1 (CPA1) transporter (TC 2.A.36) family.

The protein resides in the cell projection. It is found in the cilium. It localises to the flagellum membrane. Its function is as follows. Sperm-specific Na(+)/H(+) exchanger involved in intracellular pH regulation of spermatozoa. Involved in sperm motility and fertility. The chain is Sodium/hydrogen exchanger 9B1 (SLC9B1) from Macaca fascicularis (Crab-eating macaque).